We begin with the raw amino-acid sequence, 997 residues long: Synaptonemal complex protein 1 (997 aa).

The Mediates head to head self-assembly of N-terminal ends motif lies at 102 to 112 (PMSRLYSKLYK). The Nuclear localization signal signature appears at 118 to 121 (KKWK). 2 coiled-coil regions span residues 121 to 176 (KVSI…LIKE) and 212 to 696 (YVDL…KKIS). Residues 207–363 (ETRQVYVDLN…YQLTEEKEAQ (157 aa)) are interaction with SYCE3. Residues 698–792 (EKLLGEVEKA…VSLKKQLEVE (95 aa)) are required for pH-induced assembly of C-terminal ends into antiparallel tetramers. Positions 701 to 704 (LGEV) match the Nuclear localization signal motif. Residues 768-806 (KVALETELSNIRNELVSLKKQLEVEKEEKEKLKMEQENT) are a coiled coil. Residues 805 to 997 (NTAILTDKKD…RLKEAEKLFT (193 aa)) form a DNA-binding region. Ser824 carries the phosphoserine modification. The segment at 828–863 (TSWKFDSKTTPSQNISRLSSSMDSGKSKDNRDSLRA) is disordered. The segment covering 835-851 (KTTPSQNISRLSSSMDS) has biased composition (polar residues). Residues 852–861 (GKSKDNRDSL) show a composition bias toward basic and acidic residues. Positions 902-905 (KKRK) match the Nuclear localization signal motif. At Thr940 the chain carries Phosphothreonine.

Structural component of synaptonemal complexes. Homotetramer that consists of an N-terminal four-helical bundle that bifurcates into two elongated C-terminal dimeric coiled coils. This tetrameric building block potentially self-assembles into a supramolecular zipper-like lattice to mediate meiotic chromosome synapsis. Self-assembly is likely initiated by local proton density at chromosome axis, which is predicted to trigger antiparallel back to back assembly of adjacent C-terminal ends into tetrameric structures that anchor to chromosomal DNA. Then the N-terminal ends are predicted to undergo cooperative antiparallel head to head assembly at the midline of synaptonemal complexes central element to form a zipper-like lattice between properly aligned homologous chromosomes. The nascent synapsis generated by SYCP1 is stabilized through interaction with central element proteins SYCE1 and SYCE2. Interacts (via tetrameric core) with SYCE3; the interaction remodels SYCP1 homotetramers to 2:1 heterotrimers with SYCE3. SYCP1/SYCE3 heterotrimers form lattice assemblies as part of the mature synaptonemal complex via both lateral and head-to-head interactions. Forms a complex with EWSR1, PRDM9, SYCP3 and REC8; complex formation is dependent of phosphorylated form of REC8 and requires PRDM9 bound to hotspot DNA; EWSR1 joins PRDM9 with the chromosomal axis through REC8. Interacts with SPO16. As to expression, testis.

It is found in the nucleus. It localises to the chromosome. The protein localises to the centromere. Functionally, major component of the transverse filaments of synaptonemal complexes, formed between homologous chromosomes during meiotic prophase. Required for normal assembly of the central element of the synaptonemal complexes. Required for normal centromere pairing during meiosis. Required for normal meiotic chromosome synapsis during oocyte and spermatocyte development and for normal male and female fertility. The protein is Synaptonemal complex protein 1 of Rattus norvegicus (Rat).